The chain runs to 461 residues: Nicotianamine aminotransferase A (461 aa).

Residues 1-29 are disordered; the sequence is MVHQSNGHGEAAAAAANGKSNGHAAAANG. Residues 11–29 show a composition bias toward low complexity; sequence AAAAAANGKSNGHAAAANG. Residue Lys289 is modified to N6-(pyridoxal phosphate)lysine.

The protein belongs to the class-I pyridoxal-phosphate-dependent aminotransferase family. Requires pyridoxal 5'-phosphate as cofactor. Expressed in roots, but not in leaves.

It catalyses the reaction nicotianamine + 2-oxoglutarate = 3''-deamino-3''-oxonicotianamine + L-glutamate. Functionally, involved in biosynthesis of mugineic acid family phytosiderophores. The polypeptide is Nicotianamine aminotransferase A (Hordeum vulgare (Barley)).